The following is a 226-amino-acid chain: Ribose-5-phosphate isomerase A (226 aa).

Residues 33 to 36, 86 to 89, and 99 to 102 contribute to the substrate site; these read TGST, DGAD, and KGGG. Glutamate 108 (proton acceptor) is an active-site residue. Position 126 (lysine 126) interacts with substrate.

This sequence belongs to the ribose 5-phosphate isomerase family. Homodimer.

The enzyme catalyses aldehydo-D-ribose 5-phosphate = D-ribulose 5-phosphate. The protein operates within carbohydrate degradation; pentose phosphate pathway; D-ribose 5-phosphate from D-ribulose 5-phosphate (non-oxidative stage): step 1/1. In terms of biological role, catalyzes the reversible conversion of ribose-5-phosphate to ribulose 5-phosphate. The protein is Ribose-5-phosphate isomerase A of Bordetella pertussis (strain Tohama I / ATCC BAA-589 / NCTC 13251).